Here is an 872-residue protein sequence, read N- to C-terminus: Alanine--tRNA ligase (872 aa).

Residues His567, His571, Cys669, and His673 each contribute to the Zn(2+) site.

It belongs to the class-II aminoacyl-tRNA synthetase family. Zn(2+) serves as cofactor.

It is found in the cytoplasm. It catalyses the reaction tRNA(Ala) + L-alanine + ATP = L-alanyl-tRNA(Ala) + AMP + diphosphate. In terms of biological role, catalyzes the attachment of alanine to tRNA(Ala) in a two-step reaction: alanine is first activated by ATP to form Ala-AMP and then transferred to the acceptor end of tRNA(Ala). Also edits incorrectly charged Ser-tRNA(Ala) and Gly-tRNA(Ala) via its editing domain. This Streptococcus suis (strain 98HAH33) protein is Alanine--tRNA ligase.